The sequence spans 297 residues: Probable endonuclease 4 (297 aa).

Residues His69, His110, Glu145, Asp179, His182, His214, Asp227, His229, and Glu259 each contribute to the Zn(2+) site.

Belongs to the AP endonuclease 2 family. The cofactor is Zn(2+).

It catalyses the reaction Endonucleolytic cleavage to 5'-phosphooligonucleotide end-products.. Its function is as follows. Endonuclease IV plays a role in DNA repair. It cleaves phosphodiester bonds at apurinic or apyrimidinic (AP) sites, generating a 3'-hydroxyl group and a 5'-terminal sugar phosphate. The chain is Probable endonuclease 4 from Oceanobacillus iheyensis (strain DSM 14371 / CIP 107618 / JCM 11309 / KCTC 3954 / HTE831).